A 394-amino-acid chain; its full sequence is ORC1-type DNA replication protein 3 (394 aa).

Residues 66 to 70 (TGKTF) and Tyr207 contribute to the ATP site.

This sequence belongs to the CDC6/cdc18 family. In terms of assembly, monomer. Interacts with Cdc6-1, Cdc6-2, MCM and PolB1.

Involved in regulation of DNA replication. May play essential roles in origin recognition and cell cycle control of replication. Binds to DNA, with a preference for molecules that contain a bubble, a fork, or a tail. Inhibits the binding of the MCM helicase to the origin DNA and inhibits its DNA helicase activity. Also regulates the DNA polymerase and the nuclease activities of PolB1. Inhibits the DNA-binding activity of Cdc6-1 and Cdc6-2. This chain is ORC1-type DNA replication protein 3 (cdc6-3), found in Saccharolobus solfataricus (strain ATCC 35092 / DSM 1617 / JCM 11322 / P2) (Sulfolobus solfataricus).